The chain runs to 234 residues: MNSTPDASSRPSIRALTLLEGRVLGVLVEKQHTVPDSYPLSLNALTLGCNQKTGRAPVMNATEAEVLTAVDGLKRLSLVMEGSSSRVPRFEHNMNRVLGLPSQSAALLTILLLRGPQTAAELRLNSARLHGFADISSVEAFLDELAANDPPRVVKLARVPGERENRWMHLLCGEVSVSELAQPGDEDDSVPLSAFEAVKAEQKRLADEVSRLQTLVRRMAAELGIDAGDLTAGE.

This sequence belongs to the UPF0502 family.

The chain is UPF0502 protein Bphyt_5265 from Paraburkholderia phytofirmans (strain DSM 17436 / LMG 22146 / PsJN) (Burkholderia phytofirmans).